Here is a 352-residue protein sequence, read N- to C-terminus: Protein RecA (352 aa).

67 to 74 contacts ATP; that stretch reads GPESSGKT.

This sequence belongs to the RecA family.

It is found in the cytoplasm. Functionally, can catalyze the hydrolysis of ATP in the presence of single-stranded DNA, the ATP-dependent uptake of single-stranded DNA by duplex DNA, and the ATP-dependent hybridization of homologous single-stranded DNAs. It interacts with LexA causing its activation and leading to its autocatalytic cleavage. The protein is Protein RecA of Enterobacter sp. (strain 638).